Here is a 297-residue protein sequence, read N- to C-terminus: N-acetylmuramic acid 6-phosphate etherase (297 aa).

The region spanning 55–218 is the SIS domain; the sequence is AVAALKSGGR…STGAMVKFGK (164 aa). Glu83 serves as the catalytic Proton donor. Glu114 is an active-site residue.

The protein belongs to the GCKR-like family. MurNAc-6-P etherase subfamily. Homodimer.

It catalyses the reaction N-acetyl-D-muramate 6-phosphate + H2O = N-acetyl-D-glucosamine 6-phosphate + (R)-lactate. The protein operates within amino-sugar metabolism; 1,6-anhydro-N-acetylmuramate degradation. Its pathway is amino-sugar metabolism; N-acetylmuramate degradation. It participates in cell wall biogenesis; peptidoglycan recycling. Functionally, specifically catalyzes the cleavage of the D-lactyl ether substituent of MurNAc 6-phosphate, producing GlcNAc 6-phosphate and D-lactate. Together with AnmK, is also required for the utilization of anhydro-N-acetylmuramic acid (anhMurNAc) either imported from the medium or derived from its own cell wall murein, and thus plays a role in cell wall recycling. The chain is N-acetylmuramic acid 6-phosphate etherase from Salmonella dublin (strain CT_02021853).